Here is a 430-residue protein sequence, read N- to C-terminus: Centrosomal protein CEP57L1 (430 aa).

S45 bears the Phosphoserine mark. Residues 46–213 adopt a coiled-coil conformation; the sequence is PNNQALVSAL…HQRRLFQDRA (168 aa). Disordered regions lie at residues 248 to 290 and 362 to 430; these read CLKR…GEPF and RKLQ…KWEQ. 3 stretches are compositionally biased toward basic and acidic residues: residues 249 to 272, 362 to 372, and 421 to 430; these read LKRE…ERPP, RKLQEKVENSR, and LRRDDVKWEQ. Residues 290–377 are a coiled coil; the sequence is FSICDNLSEL…VENSRINESS (88 aa).

This sequence belongs to the translokin family.

Its subcellular location is the cytoplasm. The protein localises to the cytoskeleton. It localises to the microtubule organizing center. The protein resides in the centrosome. In terms of biological role, centrosomal protein which may be required for microtubule attachment to centrosomes. The protein is Centrosomal protein CEP57L1 (Cep57l1) of Rattus norvegicus (Rat).